The following is a 386-amino-acid chain: Bifunctional enzyme IspD/IspF (386 aa).

Residues 1-230 (MIRDERVAAI…RARSILEAPV (230 aa)) are 2-C-methyl-D-erythritol 4-phosphate cytidylyltransferase. The 2-C-methyl-D-erythritol 2,4-cyclodiphosphate synthase stretch occupies residues 231 to 386 (AMGVGYDTHR…HAVALLVRVR (156 aa)). Residues D237 and H239 each coordinate a divalent metal cation. 4-CDP-2-C-methyl-D-erythritol 2-phosphate-binding positions include 237–239 (DTH) and 262–263 (HS). A divalent metal cation is bound at residue H270. 4-CDP-2-C-methyl-D-erythritol 2-phosphate contacts are provided by residues 284–286 (DLG), 289–293 (FPDTD), 360–363 (TTGE), F367, and R370.

It in the N-terminal section; belongs to the IspD/TarI cytidylyltransferase family. IspD subfamily. In the C-terminal section; belongs to the IspF family. A divalent metal cation serves as cofactor.

It carries out the reaction 2-C-methyl-D-erythritol 4-phosphate + CTP + H(+) = 4-CDP-2-C-methyl-D-erythritol + diphosphate. The catalysed reaction is 4-CDP-2-C-methyl-D-erythritol 2-phosphate = 2-C-methyl-D-erythritol 2,4-cyclic diphosphate + CMP. It participates in isoprenoid biosynthesis; isopentenyl diphosphate biosynthesis via DXP pathway; isopentenyl diphosphate from 1-deoxy-D-xylulose 5-phosphate: step 2/6. It functions in the pathway isoprenoid biosynthesis; isopentenyl diphosphate biosynthesis via DXP pathway; isopentenyl diphosphate from 1-deoxy-D-xylulose 5-phosphate: step 4/6. In terms of biological role, bifunctional enzyme that catalyzes the formation of 4-diphosphocytidyl-2-C-methyl-D-erythritol from CTP and 2-C-methyl-D-erythritol 4-phosphate (MEP) (IspD), and catalyzes the conversion of 4-diphosphocytidyl-2-C-methyl-D-erythritol 2-phosphate (CDP-ME2P) to 2-C-methyl-D-erythritol 2,4-cyclodiphosphate (ME-CPP) with a corresponding release of cytidine 5-monophosphate (CMP) (IspF). In Anaeromyxobacter sp. (strain Fw109-5), this protein is Bifunctional enzyme IspD/IspF.